The sequence spans 355 residues: 3-dehydroquinate synthase (355 aa).

NAD(+)-binding positions include 105–109 (GVVGD), 129–130 (TS), Lys-142, Lys-151, and 169–172 (TLKT). Glu-184, His-246, and His-263 together coordinate Zn(2+).

Belongs to the sugar phosphate cyclases superfamily. Dehydroquinate synthase family. The cofactor is NAD(+). Co(2+) serves as cofactor. Requires Zn(2+) as cofactor.

Its subcellular location is the cytoplasm. It catalyses the reaction 7-phospho-2-dehydro-3-deoxy-D-arabino-heptonate = 3-dehydroquinate + phosphate. It participates in metabolic intermediate biosynthesis; chorismate biosynthesis; chorismate from D-erythrose 4-phosphate and phosphoenolpyruvate: step 2/7. Catalyzes the conversion of 3-deoxy-D-arabino-heptulosonate 7-phosphate (DAHP) to dehydroquinate (DHQ). The polypeptide is 3-dehydroquinate synthase (Streptococcus agalactiae serotype V (strain ATCC BAA-611 / 2603 V/R)).